A 120-amino-acid chain; its full sequence is Large ribosomal subunit protein uL18 (120 aa).

The protein belongs to the universal ribosomal protein uL18 family. Part of the 50S ribosomal subunit; part of the 5S rRNA/L5/L18/L25 subcomplex. Contacts the 5S and 23S rRNAs.

This is one of the proteins that bind and probably mediate the attachment of the 5S RNA into the large ribosomal subunit, where it forms part of the central protuberance. The polypeptide is Large ribosomal subunit protein uL18 (Bacillus cereus (strain ATCC 10987 / NRS 248)).